The following is a 317-amino-acid chain: Ribosomal protein L11 methyltransferase (317 aa).

Residues Thr-139, Gly-162, Asp-184, and Asn-226 each coordinate S-adenosyl-L-methionine. Residues 274-297 (EHVATRPDPASPGGDRRAGRGDAG) are disordered.

The protein belongs to the methyltransferase superfamily. PrmA family.

Its subcellular location is the cytoplasm. The enzyme catalyses L-lysyl-[protein] + 3 S-adenosyl-L-methionine = N(6),N(6),N(6)-trimethyl-L-lysyl-[protein] + 3 S-adenosyl-L-homocysteine + 3 H(+). Methylates ribosomal protein L11. This Sorangium cellulosum (strain So ce56) (Polyangium cellulosum (strain So ce56)) protein is Ribosomal protein L11 methyltransferase.